A 541-amino-acid chain; its full sequence is Solute carrier family 22 member 10 (541 aa).

Over M1 to R15 the chain is Cytoplasmic. The helical transmembrane segment at F16–L36 threads the bilayer. The Extracellular segment spans residues L37–K145. 2 N-linked (GlcNAc...) asparagine glycosylation sites follow: N56 and N102. The helical transmembrane segment at S146 to V166 threads the bilayer. At S167 to A193 the chain is on the cytoplasmic side. A helical membrane pass occupies residues P194–I214. The Extracellular portion of the chain corresponds to S215–K230. A helical transmembrane segment spans residues A231 to L251. Over A252–Q259 the chain is Cytoplasmic. The chain crosses the membrane as a helical span at residues T260 to V280. At E281 to R349 the chain is on the extracellular side. The helical transmembrane segment at I350–N370 threads the bilayer. Topologically, residues L371–N377 are cytoplasmic. A helical transmembrane segment spans residues I378–L398. Residues T399–R406 are Extracellular-facing. Residues I407–P427 traverse the membrane as a helical segment. The Cytoplasmic portion of the chain corresponds to K428–A436. The chain crosses the membrane as a helical span at residues L437 to I457. Residues E458–D472 are Extracellular-facing. A helical membrane pass occupies residues L473–F493. The Cytoplasmic portion of the chain corresponds to T494–T495. A helical membrane pass occupies residues L496 to P516. Residues E517–A541 lie on the Extracellular side of the membrane.

The protein belongs to the major facilitator (TC 2.A.1) superfamily. Organic cation transporter (TC 2.A.1.19) family. In terms of tissue distribution, detected in fetal and adult liver, and in adult kidney.

Its subcellular location is the membrane. The sequence is that of Solute carrier family 22 member 10 (SLC22A10) from Homo sapiens (Human).